The primary structure comprises 429 residues: 3-phosphoshikimate 1-carboxyvinyltransferase (429 aa).

The 3-phosphoshikimate site is built by Lys23, Ser24, and Arg28. Residue Lys23 participates in phosphoenolpyruvate binding. Phosphoenolpyruvate contacts are provided by Gly95 and Arg123. 3-phosphoshikimate is bound by residues Ser168, Gln170, Asp316, and Lys343. Gln170 is a binding site for phosphoenolpyruvate. Asp316 acts as the Proton acceptor in catalysis. Residues Arg347 and Arg389 each coordinate phosphoenolpyruvate.

It belongs to the EPSP synthase family. In terms of assembly, monomer.

The protein resides in the cytoplasm. The catalysed reaction is 3-phosphoshikimate + phosphoenolpyruvate = 5-O-(1-carboxyvinyl)-3-phosphoshikimate + phosphate. It functions in the pathway metabolic intermediate biosynthesis; chorismate biosynthesis; chorismate from D-erythrose 4-phosphate and phosphoenolpyruvate: step 6/7. Catalyzes the transfer of the enolpyruvyl moiety of phosphoenolpyruvate (PEP) to the 5-hydroxyl of shikimate-3-phosphate (S3P) to produce enolpyruvyl shikimate-3-phosphate and inorganic phosphate. This is 3-phosphoshikimate 1-carboxyvinyltransferase from Bacillus cereus (strain AH187).